The following is a 78-amino-acid chain: Hainantoxin-XX.3 (78 aa).

The first 23 residues, Met-1 to Ala-23, serve as a signal peptide directing secretion. Positions Glu-24–Arg-47 are excised as a propeptide. 3 disulfide bridges follow: Cys-49–Cys-62, Cys-56–Cys-66, and Cys-61–Cys-77.

It belongs to the hainantoxin family. 20 subfamily. In terms of tissue distribution, expressed by the venom gland.

Its subcellular location is the secreted. Putative ion channel inhibitor. In Cyriopagopus hainanus (Chinese bird spider), this protein is Hainantoxin-XX.3.